The sequence spans 155 residues: Small ribosomal subunit protein uS7 (155 aa).

This sequence belongs to the universal ribosomal protein uS7 family. In terms of assembly, part of the 30S ribosomal subunit. Contacts proteins S9 and S11.

Functionally, one of the primary rRNA binding proteins, it binds directly to 16S rRNA where it nucleates assembly of the head domain of the 30S subunit. Is located at the subunit interface close to the decoding center, probably blocks exit of the E-site tRNA. The polypeptide is Small ribosomal subunit protein uS7 (Chlorobium phaeobacteroides (strain BS1)).